An 80-amino-acid polypeptide reads, in one-letter code: Conotoxin MaIr193 (80 aa).

A signal peptide spans 1–22 (MKLTCMMIVAVLFLTAWTLVTA). Positions 23-51 (DGTRDGLKNRFPKARLEMKNSEAPRSRGR) are excised as a propeptide. 3 disulfides stabilise this stretch: Cys-52-Cys-69, Cys-59-Cys-73, and Cys-68-Cys-77. Pro-64 bears the 4-hydroxyproline mark.

The protein belongs to the conotoxin O1 superfamily. In terms of tissue distribution, expressed by the venom duct.

It localises to the secreted. The protein is Conotoxin MaIr193 of Conus marmoreus (Marble cone).